An 893-amino-acid polypeptide reads, in one-letter code: Eukaryotic translation initiation factor 3 subunit A (893 aa).

The PCI domain maps to 319–502 (LQRMAAHVLL…NSIFFGTDLT (184 aa)). Coiled-coil stretches lie at residues 576 to 707 (QKII…RAKR) and 784 to 881 (EIAL…REVA). Disordered stretches follow at residues 592–634 (AREL…EIQA) and 837–893 (AEAR…RRRQ). Basic and acidic residues predominate over residues 837–881 (AEARRLEREAEDEKRRQQYEKQRAKEEEAERKIQEDRDRLAREVA).

This sequence belongs to the eIF-3 subunit A family. As to quaternary structure, component of the eukaryotic translation initiation factor 3 (eIF-3) complex. The eIF-3 complex interacts with pix.

It is found in the cytoplasm. Its function is as follows. RNA-binding component of the eukaryotic translation initiation factor 3 (eIF-3) complex, which is involved in protein synthesis of a specialized repertoire of mRNAs and, together with other initiation factors, stimulates binding of mRNA and methionyl-tRNAi to the 40S ribosome. The eIF-3 complex specifically targets and initiates translation of a subset of mRNAs involved in cell proliferation. This is Eukaryotic translation initiation factor 3 subunit A from Drosophila grimshawi (Hawaiian fruit fly).